We begin with the raw amino-acid sequence, 220 residues long: MEVGCVYIITTQLYEPLDIYKIGCTKDINRRLKTMNASRISFDKFFIVNQIQTFHYFKLEQGLHKLLKKYRLNNEFFQCNVNIIEKAISDYANNNVFMLHDDKIAHVAIEKKLKWFQKNNLFSITDTNLEIFLNESSLINEIKQWLSVFDKHNLYKFLHPSHFYNIVSYLKTVCIQNDDEEEFLINEMNMLSINTKDDNSKDDNNDSEDLSKQIDNLKLD.

Positions lysine 196–aspartate 220 are disordered.

This is an uncharacterized protein from Invertebrate iridescent virus 6 (IIV-6).